A 556-amino-acid polypeptide reads, in one-letter code: Arginine--tRNA ligase (556 aa).

The short motif at 132–142 (ANPTGDLHLGH) is the 'HIGH' region element.

The protein belongs to the class-I aminoacyl-tRNA synthetase family. Monomer.

The protein localises to the cytoplasm. It carries out the reaction tRNA(Arg) + L-arginine + ATP = L-arginyl-tRNA(Arg) + AMP + diphosphate. The sequence is that of Arginine--tRNA ligase from Listeria welshimeri serovar 6b (strain ATCC 35897 / DSM 20650 / CCUG 15529 / CIP 8149 / NCTC 11857 / SLCC 5334 / V8).